The sequence spans 310 residues: uncharacterized protein (310 aa).

The next 9 membrane-spanning stretches (helical) occupy residues 1-21 (MIYF…MFSK), 38-58 (FFFY…VVYT), 74-94 (TSYF…FFIF), 110-130 (YGLW…SFLF), 135-155 (WILY…IFFS), 194-214 (IFIT…IVFS), 228-248 (LFII…MYLF), 256-276 (FPIM…KILI), and 284-304 (IFLT…INLI).

The protein belongs to the TerC family.

Its subcellular location is the cell membrane. This is an uncharacterized protein from Buchnera aphidicola subsp. Schizaphis graminum (strain Sg).